The sequence spans 323 residues: Serine racemase (323 aa).

Ser-32, Ser-33, and Lys-52 together coordinate ATP. Catalysis depends on Lys-57, which acts as the Proton acceptor. The residue at position 57 (Lys-57) is a Lysino-D-alanine (Lys); alternate. Lys-57 bears the N6-(pyridoxal phosphate)lysine; alternate mark. Position 79 (Thr-79) interacts with Ca(2+). The active-site Proton acceptor is the Ser-82. Asn-84 is a pyridoxal 5'-phosphate binding site. Residues Gln-87 and Tyr-119 each contribute to the ATP site. Residue Asp-176 coordinates Mg(2+). The pyridoxal 5'-phosphate site is built by Gly-183, Gly-184, Gly-185, Gly-186, and Leu-187. Ca(2+) is bound by residues Glu-208, Gly-212, and Asp-214. The Mg(2+) site is built by Glu-208, Gly-212, and Asp-214. Residues Glu-208, Gly-212, and Asp-214 each coordinate Mn(2+). Lys-277 contacts ATP. Ser-308 contributes to the pyridoxal 5'-phosphate binding site. Asn-311 is an ATP binding site.

This sequence belongs to the serine/threonine dehydratase family. Homodimer. The cofactor is Mg(2+). It depends on Mn(2+) as a cofactor. Ca(2+) is required as a cofactor. Requires pyridoxal 5'-phosphate as cofactor. Post-translationally, modification of the active site Lys by its substrate Ser to lysino-D-alanine reduces but does not abolish enzyme activity.

The catalysed reaction is L-serine = D-serine. The enzyme catalyses L-serine = pyruvate + NH4(+). It catalyses the reaction D-serine = pyruvate + NH4(+). Its activity is regulated as follows. Allosterically activated by ATP, by magnesium, and possibly also by other divalent metal cations. Catalyzes the synthesis of D-serine from L-serine. Has dehydratase activity towards both L-serine and D-serine. This is Serine racemase from Schizosaccharomyces pombe (strain 972 / ATCC 24843) (Fission yeast).